We begin with the raw amino-acid sequence, 272 residues long: NH(3)-dependent NAD(+) synthetase (272 aa).

Tyr-33 is a binding site for deamido-NAD(+). Residues 45–52 (GISGGQDS), Arg-79, and Gln-85 each bind ATP. Asp-51 lines the Mg(2+) pocket. Arg-138 provides a ligand contact to deamido-NAD(+). ATP is bound at residue Thr-158. Glu-163 contacts Mg(2+). Lys-171 and Asp-178 together coordinate deamido-NAD(+). ATP contacts are provided by Lys-187 and Thr-209. Deamido-NAD(+)-binding positions include Glu-224 and 258–259 (HK).

It belongs to the NAD synthetase family. As to quaternary structure, homodimer. In terms of processing, phosphorylated during sporulation.

It carries out the reaction deamido-NAD(+) + NH4(+) + ATP = AMP + diphosphate + NAD(+) + H(+). It functions in the pathway cofactor biosynthesis; NAD(+) biosynthesis; NAD(+) from deamido-NAD(+) (ammonia route): step 1/1. In terms of biological role, catalyzes the ATP-dependent amidation of deamido-NAD to form NAD. Uses ammonia as a nitrogen source. This is NH(3)-dependent NAD(+) synthetase from Bacillus subtilis (strain 168).